A 411-amino-acid chain; its full sequence is MADVVVGIQWGDEGKGKIVDRIAKDYDFVVRYQGGHNAGHTIVHKGVKHSLHLMPSGVLYPKCKNIISSAVVVSVKDLCEEISAFEDLENRLFVSDRAHVILPYHAKKDAFKEQSQNIGTTKKGIGPCYEDKMARSGIRMGDLLDDKILEEKLNAHFKAIEPFKEAYGLGENYEKDLRGYFKAYAPKIRPFIKDTTSMLIEANQKGEKILLEGAQGTLLDIDLGTYPFVTSSNTTSASACVSTGLNPKAINEVIGITKAYCTRVGNGPFPSEDTTPMGDHLRTKGAEFGTTTKRPRRCGWLDLVALKYACALNGCTQLALMKLDVLDGIDAIKVCVAYERKGERLEAFPSDLKDCMPIYQTFKGWEKSVGVRKLEDLEPNAREYIRFIEKEVGVKIGLISTSPEREDTIFL.

GTP contacts are provided by residues 11–17 (GDEGKGK) and 39–41 (GHT). Asp12 functions as the Proton acceptor in the catalytic mechanism. Residues Asp12 and Gly39 each coordinate Mg(2+). IMP contacts are provided by residues 12 to 15 (DEGK), 37 to 40 (NAGH), Thr121, Arg135, Gln215, Thr230, and Arg294. The active-site Proton donor is the His40. 290 to 296 (TTTKRPR) is a binding site for substrate. GTP is bound by residues Arg296, 322–324 (KLD), and 400–402 (STS).

This sequence belongs to the adenylosuccinate synthetase family. As to quaternary structure, homodimer. Mg(2+) is required as a cofactor.

It is found in the cytoplasm. It carries out the reaction IMP + L-aspartate + GTP = N(6)-(1,2-dicarboxyethyl)-AMP + GDP + phosphate + 2 H(+). It participates in purine metabolism; AMP biosynthesis via de novo pathway; AMP from IMP: step 1/2. In terms of biological role, plays an important role in the de novo pathway of purine nucleotide biosynthesis. Catalyzes the first committed step in the biosynthesis of AMP from IMP. In Helicobacter pylori (strain P12), this protein is Adenylosuccinate synthetase.